Reading from the N-terminus, the 1581-residue chain is Mediator of RNA polymerase II transcription subunit 1 (1581 aa).

The interaction with the Mediator complex and THRA stretch occupies residues 1 to 670 (MKAQGETEES…YGSSPLERQN (670 aa)). Residues 16 to 590 (MSSLLERLHA…SIKDRHESVG (575 aa)) form an interaction with ESR1 region. Interaction with the Mediator complex regions lie at residues 108–212 (FYVE…GYLT) and 215–390 (SGGH…SLQG). Positions 405–644 (PLILNLIRHQ…MAGNTKNHPM (240 aa)) are interaction with THRA. The tract at residues 542-789 (PASSPGYGMT…TDILSDIAEE (248 aa)) is interaction with VDR. Residue Ser-588 is modified to Phosphoserine. The short motif at 604–608 (LTSLL) is the LXXLL motif 1 element. Disordered regions lie at residues 609–705 (QITG…HQTE), 792–820 (KLPS…QSTL), 874–893 (SQSG…GDND), and 948–1566 (EHHS…DFMI). Over residues 622-632 (PTPPHHTPPPV) the composition is skewed to pro residues. The interaction with PPARGC1A and THRA stretch occupies residues 622 to 701 (PTPPHHTPPP…SSRLPPEKPK (80 aa)). Positions 645-649 (LMNLL) match the LXXLL motif 2 motif. Residues 655-675 (QDFSTLYGSSPLERQNSSSGS) are compositionally biased toward polar residues. The segment at 656-1066 (DFSTLYGSSP…TPPIPKITIQ (411 aa)) is interaction with ESR1. Ser-664 is modified (phosphoserine). The interval 681–715 (CSGSNKTKKKKSSRLPPEKPKHQTEDDFQRELFSM) is interaction with GATA1. A compositionally biased stretch (basic and acidic residues) spans 696–705 (PPEKPKHQTE). Residue Ser-795 is modified to Phosphoserine. Thr-805 is subject to Phosphothreonine. The segment covering 808–820 (RDSSSSGHSQSTL) has biased composition (polar residues). Residues 875–902 (QSGFGEEYFDESSQSGDNDDFKGFASQA) carry the Integrase domain-binding motif (IBM) motif. Ser-887 and Ser-953 each carry phosphoserine. The span at 963-974 (LGKEKTQKRVKE) shows a compositional bias: basic and acidic residues. Phosphothreonine; by MAPK1 or MAPK3 is present on Thr-1032. Residues 1034 to 1045 (PTSTGGSKSPGS) show a composition bias toward low complexity. Phosphothreonine occurs at positions 1051 and 1057. Low complexity-rich tracts occupy residues 1078 to 1094 (SSHS…SSGS) and 1101 to 1156 (SSSS…PGSS). Ser-1156 is modified (phosphoserine). Residues 1162–1195 (GLSSGSSSTKMKPQGKPSSLMNPSLSKPNISPSH) show a composition bias toward polar residues. Lys-1177 is subject to N6-acetyllysine. At Ser-1207 the chain carries Phosphoserine. Thr-1215 carries the phosphothreonine modification. 2 stretches are compositionally biased toward low complexity: residues 1218-1227 (SSKAKSPISS) and 1234-1293 (MSGT…SKGK). Phosphoserine is present on Ser-1223. Residues 1249–1421 (LGSSGSLSQK…KPGESSGEGL (173 aa)) are interaction with TP53. A Phosphoserine modification is found at Ser-1302. Over residues 1330–1345 (GVSTNSSSHPMSSKHN) the composition is skewed to polar residues. Ser-1347 bears the Phosphoserine mark. Over residues 1352-1364 (QGKREKSDKDKSK) the composition is skewed to basic and acidic residues. 2 positions are modified to phosphoserine: Ser-1403 and Ser-1433. 2 stretches are compositionally biased toward polar residues: residues 1425 to 1440 (MASS…SGST) and 1448 to 1482 (PSHS…SPSS). Position 1440 is a phosphothreonine (Thr-1440). Phosphothreonine; by MAPK1 or MAPK3 is present on Thr-1457. 5 positions are modified to phosphoserine: Ser-1463, Ser-1465, Ser-1479, Ser-1481, and Ser-1482. A compositionally biased stretch (basic residues) spans 1496–1505 (KHKKHKKEKK). Positions 1506–1522 (KVKDKDRDRDRDKDRDK) are enriched in basic and acidic residues. At Lys-1529 the chain carries N6-acetyllysine. Positions 1533–1552 (WSKSPISSDQSLSMTSNTIL) are enriched in polar residues.

It belongs to the Mediator complex subunit 1 family. As to quaternary structure, component of the Mediator complex, which is composed of MED1, MED4, MED6, MED7, MED8, MED9, MED10, MED11, MED12, MED13, MED13L, MED14, MED15, MED16, MED17, MED18, MED19, MED20, MED21, MED22, MED23, MED24, MED25, MED26, MED27, MED29, MED30, MED31, CCNC, CDK8 and CDC2L6/CDK11. The MED12, MED13, CCNC and CDK8 subunits form a distinct module termed the CDK8 module. Mediator containing the CDK8 module is less active than Mediator lacking this module in supporting transcriptional activation. Individual preparations of the Mediator complex lacking one or more distinct subunits have been variously termed ARC, CRSP, DRIP, PC2, SMCC and TRAP. This subunit specifically interacts with a number of nuclear receptors in a ligand-dependent fashion including AR, ESR1, ESR2, PPARA, PPARG, RORA, RXRA, RXRG, THRA, THRB and VDR. Interacts with CTNNB1, GABPA, GLI3, PPARGC1A and TP53. Interacts with YWHAH. Interacts with CLOCK; this interaction requires the presence of THRAP3. Interacts with GATA1 and CCAR1. Interacts with NR4A3. Interacts (via IBM motif) with PSIP1 (via IBD domain); phosphorylation increases its affinity for PSIP1. Interacts with USP22. Phosphorylated by MAPK1 or MAPK3 during G2/M phase which may enhance protein stability and promote entry into the nucleolus. Phosphorylation increases its interaction with PSIP1. Ubiquitously expressed.

The protein resides in the nucleus. Its function is as follows. Component of the Mediator complex, a coactivator involved in the regulated transcription of nearly all RNA polymerase II-dependent genes. Mediator functions as a bridge to convey information from gene-specific regulatory proteins to the basal RNA polymerase II transcription machinery. Mediator is recruited to promoters by direct interactions with regulatory proteins and serves as a scaffold for the assembly of a functional preinitiation complex with RNA polymerase II and the general transcription factors. Acts as a coactivator for GATA1-mediated transcriptional activation during erythroid differentiation of K562 erythroleukemia cells. In Homo sapiens (Human), this protein is Mediator of RNA polymerase II transcription subunit 1 (MED1).